Reading from the N-terminus, the 377-residue chain is tRNA pseudouridine synthase B (377 aa).

Asp-53 (nucleophile) is an active-site residue.

Belongs to the pseudouridine synthase TruB family. Type 1 subfamily.

It catalyses the reaction uridine(55) in tRNA = pseudouridine(55) in tRNA. In terms of biological role, responsible for synthesis of pseudouridine from uracil-55 in the psi GC loop of transfer RNAs. This chain is tRNA pseudouridine synthase B, found in Tropheryma whipplei (strain Twist) (Whipple's bacillus).